The chain runs to 168 residues: Ribosome maturation factor RimP (168 aa).

It belongs to the RimP family.

It localises to the cytoplasm. Its function is as follows. Required for maturation of 30S ribosomal subunits. This chain is Ribosome maturation factor RimP, found in Rickettsia bellii (strain OSU 85-389).